A 327-amino-acid polypeptide reads, in one-letter code: Glycerol-3-phosphate dehydrogenase [NAD(P)+] (327 aa).

NADPH contacts are provided by tryptophan 16, arginine 36, and lysine 108. The sn-glycerol 3-phosphate site is built by lysine 108, glycine 136, and serine 138. An NADPH-binding site is contributed by alanine 140. Residues lysine 191, aspartate 244, serine 254, arginine 255, and asparagine 256 each contribute to the sn-glycerol 3-phosphate site. The active-site Proton acceptor is the lysine 191. Residue arginine 255 coordinates NADPH. Residues leucine 274 and glutamate 276 each coordinate NADPH.

Belongs to the NAD-dependent glycerol-3-phosphate dehydrogenase family.

It localises to the cytoplasm. The enzyme catalyses sn-glycerol 3-phosphate + NAD(+) = dihydroxyacetone phosphate + NADH + H(+). It carries out the reaction sn-glycerol 3-phosphate + NADP(+) = dihydroxyacetone phosphate + NADPH + H(+). It functions in the pathway membrane lipid metabolism; glycerophospholipid metabolism. In terms of biological role, catalyzes the reduction of the glycolytic intermediate dihydroxyacetone phosphate (DHAP) to sn-glycerol 3-phosphate (G3P), the key precursor for phospholipid synthesis. This is Glycerol-3-phosphate dehydrogenase [NAD(P)+] from Bradyrhizobium sp. (strain ORS 278).